The following is a 213-amino-acid chain: tRNA (guanine-N(7)-)-methyltransferase (213 aa).

The S-adenosyl-L-methionine site is built by Asp40, Glu65, Asn92, and Asp118. Residue Asp118 is part of the active site. Positions 122 and 154 each coordinate substrate.

This sequence belongs to the class I-like SAM-binding methyltransferase superfamily. TrmB family.

The catalysed reaction is guanosine(46) in tRNA + S-adenosyl-L-methionine = N(7)-methylguanosine(46) in tRNA + S-adenosyl-L-homocysteine. It participates in tRNA modification; N(7)-methylguanine-tRNA biosynthesis. Functionally, catalyzes the formation of N(7)-methylguanine at position 46 (m7G46) in tRNA. This chain is tRNA (guanine-N(7)-)-methyltransferase, found in Synechococcus elongatus (strain ATCC 33912 / PCC 7942 / FACHB-805) (Anacystis nidulans R2).